We begin with the raw amino-acid sequence, 177 residues long: ATP synthase subunit delta (177 aa).

The protein belongs to the ATPase delta chain family. F-type ATPases have 2 components, F(1) - the catalytic core - and F(0) - the membrane proton channel. F(1) has five subunits: alpha(3), beta(3), gamma(1), delta(1), epsilon(1). CF(0) has four main subunits: a(1), b(1), b'(1) and c(10-14). The alpha and beta chains form an alternating ring which encloses part of the gamma chain. F(1) is attached to F(0) by a central stalk formed by the gamma and epsilon chains, while a peripheral stalk is formed by the delta, b and b' chains.

It localises to the cell inner membrane. F(1)F(0) ATP synthase produces ATP from ADP in the presence of a proton or sodium gradient. F-type ATPases consist of two structural domains, F(1) containing the extramembraneous catalytic core and F(0) containing the membrane proton channel, linked together by a central stalk and a peripheral stalk. During catalysis, ATP synthesis in the catalytic domain of F(1) is coupled via a rotary mechanism of the central stalk subunits to proton translocation. Its function is as follows. This protein is part of the stalk that links CF(0) to CF(1). It either transmits conformational changes from CF(0) to CF(1) or is implicated in proton conduction. The polypeptide is ATP synthase subunit delta (Methylibium petroleiphilum (strain ATCC BAA-1232 / LMG 22953 / PM1)).